A 147-amino-acid polypeptide reads, in one-letter code: UPF0306 protein YhbP (147 aa).

This sequence belongs to the UPF0306 family.

This Escherichia coli O157:H7 protein is UPF0306 protein YhbP.